The following is a 418-amino-acid chain: Gamma-glutamyl phosphate reductase (418 aa).

This sequence belongs to the gamma-glutamyl phosphate reductase family.

The protein resides in the cytoplasm. It catalyses the reaction L-glutamate 5-semialdehyde + phosphate + NADP(+) = L-glutamyl 5-phosphate + NADPH + H(+). Its pathway is amino-acid biosynthesis; L-proline biosynthesis; L-glutamate 5-semialdehyde from L-glutamate: step 2/2. Its function is as follows. Catalyzes the NADPH-dependent reduction of L-glutamate 5-phosphate into L-glutamate 5-semialdehyde and phosphate. The product spontaneously undergoes cyclization to form 1-pyrroline-5-carboxylate. This Thermobifida fusca (strain YX) protein is Gamma-glutamyl phosphate reductase.